The primary structure comprises 116 residues: UPF0342 protein CTC_01059 (116 aa).

It belongs to the UPF0342 family.

This chain is UPF0342 protein CTC_01059, found in Clostridium tetani (strain Massachusetts / E88).